A 1343-amino-acid polypeptide reads, in one-letter code: Kinesin-like protein KIF7 (1343 aa).

The region spanning 15-349 is the Kinesin motor domain; it reads PVRVALRVRP…LNYASRAQNI (335 aa). Residue 94–101 participates in ATP binding; that stretch reads GQTGSGKT. Disordered regions lie at residues 356–382, 451–483, and 611–639; these read NWRP…RSET, RSAL…RKED, and EVNR…TLHL. An interaction with DLG5 region spans residues 358–479; the sequence is RPEAERPPEE…EDQAAQGAGG (122 aa). The tract at residues 358–1206 is interaction with SMO; it reads RPEAERPPEE…LGRYMWINQE (849 aa). Residues 480 to 542 are a coiled coil; the sequence is RKEDEGAQQL…ELRLRLELVR (63 aa). A sufficient for interaction with NPHP1 region spans residues 513–775; sequence AMEQYKLQSD…LRELEGKELQ (263 aa). Coiled coils occupy residues 698-1057 and 1109-1211; these read ASEW…AAIE and TLRE…KQKL. Ser-898 bears the Phosphoserine mark. 2 disordered regions span residues 1219–1238 and 1310–1343; these read HSRG…APGN and GEAG…KNPL.

This sequence belongs to the TRAFAC class myosin-kinesin ATPase superfamily. Kinesin family. KIF27 subfamily. In terms of assembly, can form homodimers and interacts with microtubules. Interacts with GLI1, GLI2, GLI3, SMO and SUFU. Interacts with NPHP1. Interacts with SMO and DLG5 (via PDZ4 or guanylate kinase-like domain). Polyubiquitinated by UBR3. Embryonic stem cells, melanotic melanoma and Jurkat T-cells. Expressed in heart, lung, liver, kidney, testis, retina, placenta, pancreas, colon, small intestin, prostate and thymus.

It localises to the cell projection. Its subcellular location is the cilium. The protein resides in the cytoplasm. The protein localises to the cytoskeleton. It is found in the cilium basal body. Functionally, essential for hedgehog signaling regulation: acts both as a negative and positive regulator of sonic hedgehog (Shh) and Indian hedgehog (Ihh) pathways, acting downstream of SMO, through both SUFU-dependent and -independent mechanisms. Involved in the regulation of microtubular dynamics. Required for proper organization of the ciliary tip and control of ciliary localization of SUFU-GLI2 complexes. Required for localization of GLI3 to cilia in response to Shh. Negatively regulates Shh signaling by preventing inappropriate activation of the transcriptional activator GLI2 in the absence of ligand. Positively regulates Shh signaling by preventing the processing of the transcription factor GLI3 into its repressor form. In keratinocytes, promotes the dissociation of SUFU-GLI2 complexes, GLI2 nuclear translocation and Shh signaling activation. Involved in the regulation of epidermal differentiation and chondrocyte development. This chain is Kinesin-like protein KIF7 (KIF7), found in Homo sapiens (Human).